A 173-amino-acid chain; its full sequence is MTYFVLFLSLCFVLGGLAVASNPSPYYGVVGLVLASVVGCGWLLSLGVSFVSLVLFMVYLGGMLVVFVYSVALAADPFPEAWGDWRVVGYGVSFVGVLVMGLVIGGFIGCLNFGVVTVDSVGMFSVRLDFSGVAMFYSCGVGMFLVAGWGLLLTLFVVLELVRGLSRGAIRAV.

5 consecutive transmembrane segments (helical) span residues 1-21 (MTYF…AVAS), 27-47 (YGVV…LSLG), 48-68 (VSFV…VVFV), 91-111 (GVSF…IGCL), and 139-159 (CGVG…FVVL).

This sequence belongs to the complex I subunit 6 family.

It is found in the mitochondrion membrane. It carries out the reaction a ubiquinone + NADH + 5 H(+)(in) = a ubiquinol + NAD(+) + 4 H(+)(out). Core subunit of the mitochondrial membrane respiratory chain NADH dehydrogenase (Complex I) that is believed to belong to the minimal assembly required for catalysis. Complex I functions in the transfer of electrons from NADH to the respiratory chain. The immediate electron acceptor for the enzyme is believed to be ubiquinone. The protein is NADH-ubiquinone oxidoreductase chain 6 (MT-ND6) of Fratercula cirrhata (Tufted puffin).